A 390-amino-acid polypeptide reads, in one-letter code: Leucine aminopeptidase 1 (390 aa).

A signal peptide spans 1 to 18 (MKLSTALVLGATATGAWS). The propeptide occupies 19–90 (YAIPQLEQEV…FPTLDAGSYV (72 aa)). A glycan (N-linked (GlcNAc...) asparagine) is linked at Asn-120. Zn(2+) is bound by residues His-190, Asp-209, Glu-248, and Asp-275. Cysteines 324 and 328 form a disulfide. Residue His-357 coordinates Zn(2+).

This sequence belongs to the peptidase M28 family. M28E subfamily. In terms of assembly, monomer. Zn(2+) serves as cofactor.

The protein localises to the secreted. In terms of biological role, extracellular aminopeptidase that allows assimilation of proteinaceous substrates. This is Leucine aminopeptidase 1 (lap1) from Emericella nidulans (strain FGSC A4 / ATCC 38163 / CBS 112.46 / NRRL 194 / M139) (Aspergillus nidulans).